Here is a 250-residue protein sequence, read N- to C-terminus: 5-oxoprolinase subunit A (250 aa).

It belongs to the LamB/PxpA family. In terms of assembly, forms a complex composed of PxpA, PxpB and PxpC.

It carries out the reaction 5-oxo-L-proline + ATP + 2 H2O = L-glutamate + ADP + phosphate + H(+). In terms of biological role, catalyzes the cleavage of 5-oxoproline to form L-glutamate coupled to the hydrolysis of ATP to ADP and inorganic phosphate. The polypeptide is 5-oxoprolinase subunit A (Thermus thermophilus (strain ATCC BAA-163 / DSM 7039 / HB27)).